The following is a 188-amino-acid chain: Elongation factor P (188 aa).

Position 34 is an N6-(3,6-diaminohexanoyl)-5-hydroxylysine (K34).

The protein belongs to the elongation factor P family. Post-translationally, may be beta-lysylated on the epsilon-amino group of Lys-34 by the combined action of EpmA and EpmB, and then hydroxylated on the C5 position of the same residue by EpmC (if this protein is present). Lysylation is critical for the stimulatory effect of EF-P on peptide-bond formation. The lysylation moiety may extend toward the peptidyltransferase center and stabilize the terminal 3-CCA end of the tRNA. Hydroxylation of the C5 position on Lys-34 may allow additional potential stabilizing hydrogen-bond interactions with the P-tRNA.

Its subcellular location is the cytoplasm. Its pathway is protein biosynthesis; polypeptide chain elongation. Involved in peptide bond synthesis. Alleviates ribosome stalling that occurs when 3 or more consecutive Pro residues or the sequence PPG is present in a protein, possibly by augmenting the peptidyl transferase activity of the ribosome. Modification of Lys-34 is required for alleviation. The chain is Elongation factor P from Xanthomonas oryzae pv. oryzae (strain MAFF 311018).